Consider the following 153-residue polypeptide: MNKETKLQVEAIKNGTVIDHIPAQVGIKVLKLFDMHNSSQRVTIGLNLPSSALGNKDLLKIENVFINEEQASKLALYAPHATVNQIEDYQVVKKLALELPEFVSDVFECPNTNCITHNEPVASNFRVFEKKGDVRLKCKYCEKVFSREIVTER.

Residues Cys-109, Cys-114, Cys-138, and Cys-141 each coordinate Zn(2+).

The protein belongs to the PyrI family. As to quaternary structure, contains catalytic and regulatory chains. Requires Zn(2+) as cofactor.

In terms of biological role, involved in allosteric regulation of aspartate carbamoyltransferase. This chain is Aspartate carbamoyltransferase regulatory chain, found in Vibrio vulnificus (strain CMCP6).